A 313-amino-acid polypeptide reads, in one-letter code: Porphobilinogen deaminase (313 aa).

Cysteine 242 carries the S-(dipyrrolylmethanemethyl)cysteine modification.

The protein belongs to the HMBS family. As to quaternary structure, monomer. It depends on dipyrromethane as a cofactor.

It carries out the reaction 4 porphobilinogen + H2O = hydroxymethylbilane + 4 NH4(+). Its pathway is porphyrin-containing compound metabolism; protoporphyrin-IX biosynthesis; coproporphyrinogen-III from 5-aminolevulinate: step 2/4. Tetrapolymerization of the monopyrrole PBG into the hydroxymethylbilane pre-uroporphyrinogen in several discrete steps. This is Porphobilinogen deaminase from Yersinia pseudotuberculosis serotype IB (strain PB1/+).